The chain runs to 851 residues: DNA mismatch repair protein MutS (851 aa).

Residue 614–621 (GPNMGGKS) coordinates ATP.

This sequence belongs to the DNA mismatch repair MutS family.

Functionally, this protein is involved in the repair of mismatches in DNA. It is possible that it carries out the mismatch recognition step. This protein has a weak ATPase activity. The polypeptide is DNA mismatch repair protein MutS (Yersinia pestis).